A 358-amino-acid polypeptide reads, in one-letter code: Probable isocitrate dehydrogenase [NAD] subunit alpha, mitochondrial (358 aa).

Substrate-binding residues include arginine 108, arginine 118, arginine 139, and aspartate 226. Positions 226, 250, and 254 each coordinate Mg(2+).

The protein belongs to the isocitrate and isopropylmalate dehydrogenases family. As to quaternary structure, heterooligomer of subunits alpha, beta, and gamma in the apparent ratio of 2:1:1. Mg(2+) is required as a cofactor. It depends on Mn(2+) as a cofactor.

The protein resides in the mitochondrion. The catalysed reaction is D-threo-isocitrate + NAD(+) = 2-oxoglutarate + CO2 + NADH. The sequence is that of Probable isocitrate dehydrogenase [NAD] subunit alpha, mitochondrial (idha-1) from Caenorhabditis elegans.